The sequence spans 470 residues: UDP-N-acetylmuramoylalanine--D-glutamate ligase (470 aa).

G120–T126 contacts ATP.

The protein belongs to the MurCDEF family.

It localises to the cytoplasm. The enzyme catalyses UDP-N-acetyl-alpha-D-muramoyl-L-alanine + D-glutamate + ATP = UDP-N-acetyl-alpha-D-muramoyl-L-alanyl-D-glutamate + ADP + phosphate + H(+). It participates in cell wall biogenesis; peptidoglycan biosynthesis. Its function is as follows. Cell wall formation. Catalyzes the addition of glutamate to the nucleotide precursor UDP-N-acetylmuramoyl-L-alanine (UMA). This Nitrosomonas eutropha (strain DSM 101675 / C91 / Nm57) protein is UDP-N-acetylmuramoylalanine--D-glutamate ligase.